A 717-amino-acid chain; its full sequence is Polyribonucleotide nucleotidyltransferase (717 aa).

Aspartate 488 and aspartate 494 together coordinate Mg(2+). The 60-residue stretch at 555-614 folds into the KH domain; the sequence is PRIEVMNIPVDKIREVIGSGGKVIREIVEKTGAKINIEDDGTVKIASSSGKEIEAARKWI. One can recognise an S1 motif domain in the interval 624–692; that stretch reads GQIYEGTVVK…ERGKVRLSMK (69 aa).

Belongs to the polyribonucleotide nucleotidyltransferase family. It depends on Mg(2+) as a cofactor.

It localises to the cytoplasm. The enzyme catalyses RNA(n+1) + phosphate = RNA(n) + a ribonucleoside 5'-diphosphate. Its function is as follows. Involved in mRNA degradation. Catalyzes the phosphorolysis of single-stranded polyribonucleotides processively in the 3'- to 5'-direction. The sequence is that of Polyribonucleotide nucleotidyltransferase from Sinorhizobium fredii (strain NBRC 101917 / NGR234).